A 254-amino-acid polypeptide reads, in one-letter code: Ornithine decarboxylase antizyme (254 aa).

This sequence belongs to the ODC antizyme family. As to quaternary structure, interacts with ODC1 and thereby sterically blocks ODC homodimerization.

Functionally, ornithine decarboxylase (ODC) antizyme protein that negatively regulates ODC activity and intracellular polyamine biosynthesis and uptake in response to increased intracellular polyamine levels. Binds to ODC monomers, inhibiting the assembly of the functional ODC homodimer, and targets the monomers for ubiquitin-independent proteolytic destruction by the 26S proteasome. Required for cellular differentiation in neuronal and myogenic lineages during embryonic development. In Drosophila melanogaster (Fruit fly), this protein is Ornithine decarboxylase antizyme (Oda).